The chain runs to 685 residues: Allergen Cr-PI (685 aa).

Residues 1–16 (MKTALVFAAVVAFVAA) form the signal peptide. Asparagine 233 carries N-linked (GlcNAc...) asparagine glycosylation.

It belongs to the hemocyanin family.

It is found in the secreted. It localises to the extracellular space. Larval storage protein (LSP) which may serve as a store of amino acids for synthesis of adult proteins. The sequence is that of Allergen Cr-PI from Periplaneta americana (American cockroach).